The sequence spans 259 residues: ATP synthase subunit a (259 aa).

5 helical membrane-spanning segments follow: residues 29-49, 90-110, 134-154, 208-228, and 230-250; these read TVNI…IWIF, IAPL…MDLI, DVNI…IYSI, LVFI…LSVP, and ALFH…LTIV.

It belongs to the ATPase A chain family. In terms of assembly, F-type ATPases have 2 components, CF(1) - the catalytic core - and CF(0) - the membrane proton channel. CF(1) has five subunits: alpha(3), beta(3), gamma(1), delta(1), epsilon(1). CF(0) has three main subunits: a(1), b(2) and c(9-12). The alpha and beta chains form an alternating ring which encloses part of the gamma chain. CF(1) is attached to CF(0) by a central stalk formed by the gamma and epsilon chains, while a peripheral stalk is formed by the delta and b chains.

It is found in the cell inner membrane. In terms of biological role, key component of the proton channel; it plays a direct role in the translocation of protons across the membrane. The polypeptide is ATP synthase subunit a (Aeromonas salmonicida (strain A449)).